We begin with the raw amino-acid sequence, 2319 residues long: Neurogenic locus notch homolog protein 3 (2319 aa).

Basic residues predominate over residues 1 to 14 (MGPGARGRRRRRRL). The tract at residues 1 to 20 (MGPGARGRRRRRRLMALPPP) is disordered. The N-terminal stretch at 1-40 (MGPGARGRRRRRRLMALPPPPPPMRALPLLLLLLAGLGAA) is a signal peptide. EGF-like domains are found at residues 41 to 79 (APPC…ERCQ), 80 to 120 (LEDP…PDCS), and 121 to 158 (LPDP…RNCR). Residues 41–1645 (APPCLDGSPC…LEPPEQSVPL (1605 aa)) are Extracellular-facing. Cystine bridges form between cysteine 44/cysteine 56, cysteine 50/cysteine 67, cysteine 69/cysteine 78, cysteine 84/cysteine 95, cysteine 89/cysteine 108, cysteine 110/cysteine 119, cysteine 125/cysteine 136, cysteine 130/cysteine 146, cysteine 148/cysteine 157, cysteine 164/cysteine 176, cysteine 170/cysteine 185, cysteine 187/cysteine 196, cysteine 203/cysteine 214, cysteine 208/cysteine 224, cysteine 226/cysteine 235, cysteine 242/cysteine 253, cysteine 247/cysteine 262, cysteine 264/cysteine 273, cysteine 280/cysteine 293, cysteine 287/cysteine 302, cysteine 304/cysteine 313, cysteine 320/cysteine 331, cysteine 325/cysteine 340, cysteine 342/cysteine 351, cysteine 357/cysteine 368, cysteine 362/cysteine 379, cysteine 381/cysteine 390, cysteine 397/cysteine 410, cysteine 404/cysteine 419, cysteine 421/cysteine 430, cysteine 437/cysteine 448, cysteine 442/cysteine 457, cysteine 459/cysteine 468, cysteine 475/cysteine 486, cysteine 480/cysteine 495, cysteine 497/cysteine 506, cysteine 513/cysteine 524, cysteine 518/cysteine 533, cysteine 535/cysteine 544, cysteine 551/cysteine 561, cysteine 556/cysteine 570, cysteine 572/cysteine 581, cysteine 588/cysteine 599, cysteine 593/cysteine 608, cysteine 610/cysteine 619, cysteine 626/cysteine 636, cysteine 631/cysteine 645, cysteine 647/cysteine 656, cysteine 663/cysteine 674, cysteine 668/cysteine 683, cysteine 685/cysteine 694, cysteine 701/cysteine 711, cysteine 706/cysteine 720, cysteine 722/cysteine 731, cysteine 740/cysteine 751, cysteine 745/cysteine 760, cysteine 762/cysteine 771, cysteine 777/cysteine 788, cysteine 782/cysteine 798, cysteine 800/cysteine 809, cysteine 816/cysteine 828, cysteine 822/cysteine 837, cysteine 839/cysteine 848, cysteine 855/cysteine 866, cysteine 860/cysteine 875, cysteine 877/cysteine 886, cysteine 893/cysteine 903, cysteine 898/cysteine 912, cysteine 914/cysteine 923, cysteine 930/cysteine 941, cysteine 935/cysteine 950, cysteine 952/cysteine 961, cysteine 968/cysteine 979, cysteine 973/cysteine 988, cysteine 990/cysteine 999, cysteine 1006/cysteine 1017, cysteine 1011/cysteine 1024, cysteine 1026/cysteine 1035, cysteine 1042/cysteine 1063, cysteine 1057/cysteine 1072, cysteine 1074/cysteine 1083, cysteine 1090/cysteine 1101, cysteine 1095/cysteine 1110, cysteine 1112/cysteine 1121, cysteine 1128/cysteine 1139, cysteine 1133/cysteine 1148, cysteine 1150/cysteine 1159, cysteine 1166/cysteine 1184, cysteine 1178/cysteine 1193, cysteine 1195/cysteine 1204, cysteine 1211/cysteine 1224, cysteine 1216/cysteine 1234, cysteine 1236/cysteine 1245, cysteine 1252/cysteine 1263, cysteine 1257/cysteine 1277, cysteine 1279/cysteine 1288, cysteine 1295/cysteine 1306, cysteine 1300/cysteine 1315, and cysteine 1317/cysteine 1326. In terms of domain architecture, EGF-like 4; calcium-binding spans 160-197 (DIDECRAGASCRHGGTCINTPGSFHCLCPLGYTGLLCE). An EGF-like 5 domain is found at 199 to 236 (PIVPCAPSPCRNGGTCRQSSDVTYDCACLPGFEGQNCE). An EGF-like 6; calcium-binding domain is found at 238 to 274 (NVDDCPGHRCLNGGTCVDGVNTYNCQCPPEWTGQFCT). The region spanning 276 to 314 (DVDECQLQPNACHNGGTCFNLLGGHSCVCVNGWTGESCS) is the EGF-like 7 domain. Positions 316 to 352 (NIDDCATAVCFHGATCHDRVASFYCACPMGKTGLLCH) constitute an EGF-like 8; calcium-binding domain. The 39-residue stretch at 353-391 (LDDACVSNPCHEDAICDTNPVSGRAICTCPPGFTGGACD) folds into the EGF-like 9 domain. In terms of domain architecture, EGF-like 10; calcium-binding spans 393–431 (DVDECSIGANPCEHLGRCVNTQGSFLCQCGRGYTGPRCE). Residues 433 to 469 (DVNECLSGPCRNQATCLDRIGQFTCICMAGFTGTFCE) form the EGF-like 11; calcium-binding domain. The EGF-like 12; calcium-binding domain occupies 471–507 (DIDECQSSPCVNGGVCKDRVNGFSCTCPSGFSGSTCQ). One can recognise an EGF-like 13; calcium-binding domain in the interval 509 to 545 (DVDECASTPCRNGAKCVDQPDGYECRCAEGFEGTLCE). Residues 547-582 (NVDDCSPDPCHHGRCVDGIASFSCACAPGYTGIRCE) enclose the EGF-like 14; calcium-binding domain. Residues 584-620 (QVDECRSQPCRYGGKCLDLVDKYLCRCPPGTTGVNCE) form the EGF-like 15; calcium-binding domain. One can recognise an EGF-like 16; calcium-binding domain in the interval 622–657 (NIDDCASNPCTFGVCRDGINRYDCVCQPGFTGPLCN). The EGF-like 17; calcium-binding domain occupies 659–695 (EINECASSPCGEGGSCVDGENGFHCLCPPGSLPPLCL). EGF-like domains follow at residues 697-732 (ANHP…PRCS), 736-772 (APDA…HQCE), and 773-810 (VLSP…PRCQ). Residues 812–849 (DVDECAGASPCGPHGTCTNLPGSFRCICHGGYTGPFCD) enclose the EGF-like 21; calcium-binding domain. The 37-residue stretch at 851–887 (DIDDCDPNPCLNGGSCQDGVGSFSCSCLSGFAGPRCA) folds into the EGF-like 22; calcium-binding domain. The 36-residue stretch at 889–924 (DVDECLSSPCGPGTCTDHVASFTCTCPPGYGGFHCE) folds into the EGF-like 23; calcium-binding domain. EGF-like domains lie at 926 to 962 (DLLD…THCQ), 964 to 1000 (KVDP…NQCQ), 1002 to 1036 (PVDW…PLCD), 1038 to 1084 (PSLP…SHCE), and 1086 to 1122 (EVDP…DSCE). Residues 1124-1160 (DVDECASQPCQNGGSCIDLVAHYLCSCPPGTLGVLCE) enclose the EGF-like 29; calcium-binding domain. One can recognise an EGF-like 30; calcium-binding domain in the interval 1162-1205 (NEDDCGPGPSLDSGLRCLHNGTCVDLVGGFRCNCPPGYTGLHCE). The N-linked (GlcNAc...) asparagine glycan is linked to asparagine 1181. EGF-like domains are found at residues 1207–1246 (DINE…PRCQ), 1248–1289 (ALFP…LRCE), 1291–1327 (VARS…PSCR), and 1337–1375 (TNTS…PRCE). A glycan (N-linked (GlcNAc...) asparagine) is linked at asparagine 1338. Disulfide bonds link cysteine 1341-cysteine 1352, cysteine 1346-cysteine 1363, cysteine 1365-cysteine 1374, cysteine 1389-cysteine 1412, cysteine 1394-cysteine 1407, cysteine 1403-cysteine 1419, cysteine 1430-cysteine 1453, cysteine 1435-cysteine 1448, cysteine 1444-cysteine 1460, cysteine 1469-cysteine 1495, cysteine 1477-cysteine 1490, and cysteine 1486-cysteine 1502. 3 LNR repeats span residues 1389-1429 (CPRA…PWRQ), 1430-1467 (CEAL…GRDR), and 1469-1507 (CNPV…SEVP). Residue asparagine 1440 is glycosylated (N-linked (GlcNAc...) asparagine). The helical transmembrane segment at 1646–1666 (LPLLVAGAVFLLVIFVLGVMV) threads the bilayer. The Cytoplasmic segment spans residues 1667–2319 (ARRKREHSTL…EVTPKRQVMA (653 aa)). ANK repeat units follow at residues 1840 to 1869 (TGET…DTNA), 1873 to 1903 (SGRT…DLDA), 1907 to 1936 (DGST…DVNA), 1940 to 1969 (LGKS…NKDM), and 1973 to 2002 (KEET…NREI). Disordered stretches follow at residues 2026–2046 (LDQP…PLLC) and 2059–2129 (QSGT…EGPY). Residues 2029 to 2046 (PSGPRSPSGPHGLGPLLC) are compositionally biased toward low complexity. Arginine 2175 is subject to Omega-N-methylarginine. The interval 2197-2319 (LNPATPVSPH…EVTPKRQVMA (123 aa)) is disordered. The segment covering 2263-2288 (SLSDWSDSTPSPATATSATAAGALPA) has biased composition (low complexity). The segment covering 2297–2306 (SLPQSQTQLG) has biased composition (polar residues).

This sequence belongs to the NOTCH family. In terms of assembly, heterodimer of a C-terminal fragment N(TM) and a N-terminal fragment N(EC) which are probably linked by disulfide bonds. Interacts with MAML1, MAML2 and MAML3 which act as transcriptional coactivators for NOTCH3. Interacts with PSMA1. Interacts with HIF1AN. In terms of processing, synthesized in the endoplasmic reticulum as an inactive form which is proteolytically cleaved by a furin-like convertase in the trans-Golgi network before it reaches the plasma membrane to yield an active, ligand-accessible form. Cleavage results in a C-terminal fragment N(TM) and a N-terminal fragment N(EC). Following ligand binding, it is cleaved by TNF-alpha converting enzyme (TACE) to yield a membrane-associated intermediate fragment called notch extracellular truncation (NEXT). This fragment is then cleaved by presenilin dependent gamma-secretase to release a notch-derived peptide containing the intracellular domain (NICD) from the membrane. Post-translationally, phosphorylated. Hydroxylated by HIF1AN. Expressed in postnatal central nervous system (CNS) germinal zones and, in early postnatal life, within numerous cells throughout the CNS. It is more highly localized to ventricular germinal zones.

It localises to the cell membrane. It is found in the nucleus. Functionally, functions as a receptor for membrane-bound ligands Jagged1, Jagged2 and Delta1 to regulate cell-fate determination. Upon ligand activation through the released notch intracellular domain (NICD) it forms a transcriptional activator complex with RBPJ/RBPSUH and activates genes of the enhancer of split locus. Affects the implementation of differentiation, proliferation and apoptotic programs. Acts instructively to control the cell fate determination of CNS multipotent progenitor cells, resulting in astroglial induction and neuron/oligodendrocyte suppression. The protein is Neurogenic locus notch homolog protein 3 (Notch3) of Rattus norvegicus (Rat).